A 309-amino-acid polypeptide reads, in one-letter code: Taste receptor type 2 member 46 (309 aa).

Residue Met1 is a topological domain, extracellular. Residues 2–22 form a helical membrane-spanning segment; sequence ITFLPIIFSILIVVTFVIGNF. The Cytoplasmic segment spans residues 23–46; sequence ANGFIALANSIEWFKRQKISFADQ. A helical membrane pass occupies residues 47-67; that stretch reads ILTALAVSRVGLLWVLLLNWY. Residues 68–86 are Extracellular-facing; that stretch reads ATELNPAFYSIEVRITAYN. A helical membrane pass occupies residues 87 to 107; the sequence is VWAVISHFSNWLATSLSIFYL. Residues 108–126 are Cytoplasmic-facing; the sequence is LKIANFSNLIFLRLKRRVK. A helical membrane pass occupies residues 127 to 147; it reads SVVLVILLGPLLFLVCHLFVI. Topologically, residues 148 to 178 are extracellular; sequence NMNQIIWTKEYEGNMTWKIKLRSAMYLSDTT. Asn161 is a glycosylation site (N-linked (GlcNAc...) asparagine). A helical transmembrane segment spans residues 179–199; sequence VTILANLVPFTLTLISFLLLI. The Cytoplasmic segment spans residues 200 to 229; that stretch reads CSLCKHLKKMQLHGKGSQDPSMKVHIKALQ. A helical membrane pass occupies residues 230–250; sequence TVTSFLLLCAIYFLSVIMSVW. The Extracellular segment spans residues 251–259; sequence SFESLENKP. The chain crosses the membrane as a helical span at residues 260–280; sequence VFMFCEAITFSYPSTHPFILI. Over 281–309 the chain is Cytoplasmic; it reads WGNKKLKQTFLSVLWHVRYWVKGEKPSSS.

It belongs to the G-protein coupled receptor T2R family.

It is found in the membrane. It localises to the cell projection. The protein resides in the cilium membrane. Its function is as follows. Receptor that may play a role in the perception of bitterness and is gustducin-linked. May play a role in sensing the chemical composition of the gastrointestinal content. The activity of this receptor may stimulate alpha gustducin, mediate PLC-beta-2 activation and lead to the gating of TRPM5. In airway epithelial cells, binding of bitter compounds increases the intracellular calcium ion concentration and stimulates ciliary beat frequency. This chain is Taste receptor type 2 member 46 (TAS2R46), found in Gorilla gorilla gorilla (Western lowland gorilla).